The sequence spans 67 residues: DNA-directed RNA polymerase subunit omega (67 aa).

The protein belongs to the RNA polymerase subunit omega family. The RNAP catalytic core consists of 2 alpha, 1 beta, 1 beta' and 1 omega subunit. When a sigma factor is associated with the core the holoenzyme is formed, which can initiate transcription.

The catalysed reaction is RNA(n) + a ribonucleoside 5'-triphosphate = RNA(n+1) + diphosphate. In terms of biological role, promotes RNA polymerase assembly. Latches the N- and C-terminal regions of the beta' subunit thereby facilitating its interaction with the beta and alpha subunits. In Bordetella pertussis (strain Tohama I / ATCC BAA-589 / NCTC 13251), this protein is DNA-directed RNA polymerase subunit omega.